The following is an 843-amino-acid chain: Protein translocase subunit SecA 1 (843 aa).

Residues glutamine 91, 109 to 113 (GEGKT), and aspartate 498 each bind ATP. A compositionally biased stretch (basic and acidic residues) spans 799 to 813 (EAKHVSAEDGKEKVK). The disordered stretch occupies residues 799 to 826 (EAKHVSAEDGKEKVKPKPIVKGDQVGRN). Zn(2+)-binding residues include cysteine 829, cysteine 831, cysteine 840, and histidine 841.

It belongs to the SecA family. In terms of assembly, monomer and homodimer. Part of the essential Sec protein translocation apparatus which comprises SecA, SecYEG and auxiliary proteins SecDF. Other proteins may also be involved. It depends on Zn(2+) as a cofactor.

Its subcellular location is the cell membrane. It localises to the cytoplasm. The enzyme catalyses ATP + H2O + cellular proteinSide 1 = ADP + phosphate + cellular proteinSide 2.. Part of the Sec protein translocase complex. Interacts with the SecYEG preprotein conducting channel. Has a central role in coupling the hydrolysis of ATP to the transfer of proteins into and across the cell membrane, serving as an ATP-driven molecular motor driving the stepwise translocation of polypeptide chains across the membrane. The polypeptide is Protein translocase subunit SecA 1 (Staphylococcus aureus (strain MRSA252)).